The following is a 101-amino-acid chain: ATP-dependent Clp protease adapter protein ClpS 1 (101 aa).

Belongs to the ClpS family. As to quaternary structure, binds to the N-terminal domain of the chaperone ClpA.

Its function is as follows. Involved in the modulation of the specificity of the ClpAP-mediated ATP-dependent protein degradation. The protein is ATP-dependent Clp protease adapter protein ClpS 1 of Bradyrhizobium diazoefficiens (strain JCM 10833 / BCRC 13528 / IAM 13628 / NBRC 14792 / USDA 110).